The primary structure comprises 581 residues: Transcription factor GTE2 (581 aa).

The segment at 130 to 153 (VKKTKTKKKKIGHGQKRSNPFATD) is disordered. Over residues 131 to 145 (KKTKTKKKKIGHGQK) the composition is skewed to basic residues. The 107-residue stretch at 169 to 275 (KVLKSMMTTC…SQFDVWFNPT (107 aa)) folds into the Bromo domain. Disordered regions lie at residues 329 to 399 (PLLP…KREM) and 470 to 581 (KRQG…KEAP). A compositionally biased stretch (pro residues) spans 346–365 (PSPPPSPVQPPPPPSPPPQP). The NET domain maps to 389 to 470 (PKAKDPNKRE…NYRKMASKIK (82 aa)). Composition is skewed to basic and acidic residues over residues 390–399 (KAKDPNKREM) and 493–503 (SAEKRGRKGGE). The segment covering 504-517 (AGEEDVDIGEDIPV) has biased composition (acidic residues). Residues 530 to 564 (TAAAASGGSSSSGSFSSSGSSSSSDSESGSSSGSD) are compositionally biased toward low complexity.

The protein resides in the nucleus. This is Transcription factor GTE2 (GTE2) from Arabidopsis thaliana (Mouse-ear cress).